The chain runs to 707 residues: MAP kinase-interacting serine/threonine-protein kinase mnk-1 (707 aa).

Positions 1-24 are enriched in polar residues; that stretch reads MFFLDNTDSMTSSSRGITMPNTIS. Disordered regions lie at residues 1–29 and 101–131; these read MFFL…HEDV and RQRE…YVGR. In terms of domain architecture, Protein kinase spans 203 to 493; sequence KLTDEHLGSG…ADQILSHRWL (291 aa). ATP-binding positions include 209–217 and Lys232; that span reads LGSGAYGSV. Catalysis depends on Asp325, which acts as the Proton acceptor. 2 disordered regions span residues 589–628 and 688–707; these read RSGE…SADD and FEDE…QVNV.

Belongs to the protein kinase superfamily. CAMK Ser/Thr protein kinase family. Mg(2+) is required as a cofactor. In terms of tissue distribution, expressed in pharynx, intestine, vulva and body wall muscles.

Its subcellular location is the nucleus. It is found in the cytoplasm. It carries out the reaction L-seryl-[protein] + ATP = O-phospho-L-seryl-[protein] + ADP + H(+). It catalyses the reaction L-threonyl-[protein] + ATP = O-phospho-L-threonyl-[protein] + ADP + H(+). Its function is as follows. Serine/threonine-protein kinase which is required in the germline to positively regulate lifespan. May play a role in body wall muscle contraction. May be involved in embryonic cytokinesis. The chain is MAP kinase-interacting serine/threonine-protein kinase mnk-1 from Caenorhabditis elegans.